A 444-amino-acid polypeptide reads, in one-letter code: Adenylyltransferase and sulfurtransferase UBA4 (444 aa).

Residues Gly81, Asp102, 109 to 113 (SNLHR), Lys126, and 170 to 171 (DT) each bind ATP. 2 residues coordinate Zn(2+): Cys212 and Cys215. Cys229 functions as the Glycyl thioester intermediate; for adenylyltransferase activity in the catalytic mechanism. The Zn(2+) site is built by Cys290 and Cys293. One can recognise a Rhodanese domain in the interval 343-442 (KTKPYVLLDV…YIDEINPSLP (100 aa)). The active-site Cysteine persulfide intermediate; for sulfurtransferase activity is the Cys401.

The protein in the N-terminal section; belongs to the HesA/MoeB/ThiF family. UBA4 subfamily. The cofactor is Zn(2+).

Its subcellular location is the cytoplasm. The protein localises to the cytosol. Its pathway is tRNA modification; 5-methoxycarbonylmethyl-2-thiouridine-tRNA biosynthesis. Functionally, plays a central role in 2-thiolation of mcm(5)S(2)U at tRNA wobble positions of cytosolic tRNA(Lys), tRNA(Glu) and tRNA(Gln). Acts by mediating the C-terminal thiocarboxylation of sulfur carrier URM1. Its N-terminus first activates URM1 as acyl-adenylate (-COAMP), then the persulfide sulfur on the catalytic cysteine is transferred to URM1 to form thiocarboxylation (-COSH) of its C-terminus. The reaction probably involves hydrogen sulfide that is generated from the persulfide intermediate and that acts as a nucleophile towards URM1. Subsequently, a transient disulfide bond is formed. Does not use thiosulfate as sulfur donor; NFS1 probably acting as a sulfur donor for thiocarboxylation reactions. Prior mcm(5) tRNA modification by the elongator complex is required for 2-thiolation. May also be involved in protein urmylation. This Kluyveromyces lactis (strain ATCC 8585 / CBS 2359 / DSM 70799 / NBRC 1267 / NRRL Y-1140 / WM37) (Yeast) protein is Adenylyltransferase and sulfurtransferase UBA4.